Here is a 901-residue protein sequence, read N- to C-terminus: Protein translocase subunit SecA (901 aa).

ATP-binding positions include Gln-89, 107–111, and Asp-502; that span reads GEGKT. Zn(2+) contacts are provided by Cys-884, Cys-886, Cys-895, and His-896.

The protein belongs to the SecA family. In terms of assembly, monomer and homodimer. Part of the essential Sec protein translocation apparatus which comprises SecA, SecYEG and auxiliary proteins SecDF-YajC and YidC. Zn(2+) is required as a cofactor.

Its subcellular location is the cell inner membrane. It localises to the cytoplasm. The catalysed reaction is ATP + H2O + cellular proteinSide 1 = ADP + phosphate + cellular proteinSide 2.. Functionally, part of the Sec protein translocase complex. Interacts with the SecYEG preprotein conducting channel. Has a central role in coupling the hydrolysis of ATP to the transfer of proteins into and across the cell membrane, serving both as a receptor for the preprotein-SecB complex and as an ATP-driven molecular motor driving the stepwise translocation of polypeptide chains across the membrane. In Sinorhizobium fredii (strain NBRC 101917 / NGR234), this protein is Protein translocase subunit SecA.